Here is a 476-residue protein sequence, read N- to C-terminus: Ovarian-specific serine/threonine-protein kinase Lok (476 aa).

The region spanning 69-129 (FTAGRGEAND…NGTFVNNEKI (61 aa)) is the FHA domain. Residues 174–441 (YYVNRKLGSG…IDDVLQSSWL (268 aa)) enclose the Protein kinase domain. Residues 180 to 188 (LGSGAYGLV) and Lys203 contribute to the ATP site. Residue Asp303 is the Proton acceptor of the active site.

Belongs to the protein kinase superfamily. CAMK Ser/Thr protein kinase family. CDS1 subfamily. In stage 3 embryos, both isoforms are expressed in both somatic and pole cell nuclei. Expression in pole cell nuclei is sustained until stage 9 and weakly expressed after pole cell invagination into the abdominal cavity.

It localises to the nucleus speckle. It carries out the reaction L-seryl-[protein] + ATP = O-phospho-L-seryl-[protein] + ADP + H(+). The catalysed reaction is L-threonyl-[protein] + ATP = O-phospho-L-threonyl-[protein] + ADP + H(+). Its function is as follows. May have a role in germline establishment. In Drosophila melanogaster (Fruit fly), this protein is Ovarian-specific serine/threonine-protein kinase Lok (lok).